A 379-amino-acid polypeptide reads, in one-letter code: 1-deoxy-D-xylulose 5-phosphate reductoisomerase (379 aa).

6 residues coordinate NADPH: threonine 10, glycine 11, serine 12, isoleucine 13, asparagine 39, and asparagine 121. Residue lysine 122 coordinates 1-deoxy-D-xylulose 5-phosphate. Glutamate 123 contributes to the NADPH binding site. A Mn(2+)-binding site is contributed by aspartate 147. Residues serine 148, glutamate 149, serine 173, and histidine 196 each coordinate 1-deoxy-D-xylulose 5-phosphate. Position 149 (glutamate 149) interacts with Mn(2+). Glycine 202 lines the NADPH pocket. 4 residues coordinate 1-deoxy-D-xylulose 5-phosphate: serine 209, asparagine 214, lysine 215, and glutamate 218. Glutamate 218 is a binding site for Mn(2+).

The protein belongs to the DXR family. The cofactor is Mg(2+). Mn(2+) is required as a cofactor.

The enzyme catalyses 2-C-methyl-D-erythritol 4-phosphate + NADP(+) = 1-deoxy-D-xylulose 5-phosphate + NADPH + H(+). It participates in isoprenoid biosynthesis; isopentenyl diphosphate biosynthesis via DXP pathway; isopentenyl diphosphate from 1-deoxy-D-xylulose 5-phosphate: step 1/6. In terms of biological role, catalyzes the NADPH-dependent rearrangement and reduction of 1-deoxy-D-xylulose-5-phosphate (DXP) to 2-C-methyl-D-erythritol 4-phosphate (MEP). The chain is 1-deoxy-D-xylulose 5-phosphate reductoisomerase from Chlamydia felis (strain Fe/C-56) (Chlamydophila felis).